The chain runs to 63 residues: 2-hydroxymuconate tautomerase (63 aa).

The active-site Proton acceptor; via imino nitrogen is the P2.

This sequence belongs to the 4-oxalocrotonate tautomerase family. In terms of assembly, homohexamer.

The enzyme catalyses (2Z,4E)-2-hydroxyhexa-2,4-dienedioate = (3E)-2-oxohex-3-enedioate. Its pathway is aromatic compound metabolism; salicylate degradation. In terms of biological role, catalyzes the ketonization of 2-hydroxymuconate stereoselectively to yield 2-oxo-3-hexenedioate. This chain is 2-hydroxymuconate tautomerase (nahJ), found in Pseudomonas fluorescens.